The sequence spans 244 residues: Sepiapterin reductase (244 aa).

NADP(+) contacts are provided by residues 9 to 15 (GAGKGIG), 40 to 42 (SRT), 66 to 67 (DI), and Asn-93. Residue Phe-99 coordinates substrate. Position 116 (Thr-116) interacts with NADP(+). The substrate site is built by Ser-145 and Tyr-158. NADP(+)-binding positions include Tyr-158, Lys-162, and 191 to 196 (VYTPMW). Substrate is bound at residue Trp-196.

It belongs to the short-chain dehydrogenases/reductases (SDR) family. As to quaternary structure, homodimer.

It is found in the cytoplasm. The catalysed reaction is L-threo-7,8-dihydrobiopterin + NADP(+) = L-sepiapterin + NADPH + H(+). It catalyses the reaction L-threo-tetrahydrobiopterin + 2 NADP(+) = 6-pyruvoyl-5,6,7,8-tetrahydropterin + 2 NADPH + 2 H(+). With respect to regulation, slightly inhibited by N-acetyldopamine but not by N-acetylserotonin or melatonin. Its function is as follows. Catalyzes the final reductions in tetra-hydrobiopterin biosynthesis to form 5,6,7,8-tetrahydrobiopterin. This is Sepiapterin reductase from Chlorobaculum tepidum (strain ATCC 49652 / DSM 12025 / NBRC 103806 / TLS) (Chlorobium tepidum).